Consider the following 254-residue polypeptide: Small ribosomal subunit protein uS2 (254 aa).

This sequence belongs to the universal ribosomal protein uS2 family.

The protein is Small ribosomal subunit protein uS2 of Borrelia recurrentis (strain A1).